The following is an 838-amino-acid chain: Envelope glycoprotein H (838 aa).

Positions 1-18 (MGPGLWVVMGVLVGVAGG) are cleaved as a signal peptide. The Virion surface segment spans residues 21 to 803 (TYWTEQIDPW…DTLPIATIAP (783 aa)). N-linked (GlcNAc...) asparagine; by host glycosylation is found at N73 and N120. Residues 171–190 (GLTFPRGDDGATERHPDGRR) show a composition bias toward basic and acidic residues. The tract at residues 171–207 (GLTFPRGDDGATERHPDGRRNAPPPGPPAGTPRHPTT) is disordered. N208 and N216 each carry an N-linked (GlcNAc...) asparagine; by host glycan. A disulfide bridge links C258 with C429. The segment at 259-323 (DAALVRARYG…PAGPRYRVFV (65 aa)) is interaction with gL. Residues N332, N437, N670, and N784 are each glycosylated (N-linked (GlcNAc...) asparagine; by host). A helical membrane pass occupies residues 804–824 (GFLAASALGVVMITAALAGIL). Topologically, residues 825–838 (RVVRTCVPFLWRRE) are intravirion.

It belongs to the herpesviridae glycoprotein H family. As to quaternary structure, interacts with glycoprotein L (gL); this interaction is necessary for the correct processing and cell surface expression of gH. The heterodimer gH/gL seems to interact with gB trimers during fusion. Interacts with host integrins ITGAV/ITGB3 to mediate viral entry into epithelial cells. N-glycosylated, O-glycosylated, and sialylated.

It localises to the virion membrane. The protein localises to the host cell membrane. The protein resides in the host endosome membrane. The heterodimer glycoprotein H-glycoprotein L is required for the fusion of viral and plasma membranes leading to virus entry into the host cell. Following initial binding to host receptor, membrane fusion is mediated by the fusion machinery composed of gB and the heterodimer gH/gL. May also be involved in the fusion between the virion envelope and the outer nuclear membrane during virion morphogenesis. Interaction with host integrins ITGAV/ITGB3 triggers release of cytosolic Ca(2+) and FAK phosphorylation leading to efficient viral entry into host genital tract epithelial cells. The sequence is that of Envelope glycoprotein H from Human herpesvirus 2 (strain HG52) (HHV-2).